A 301-amino-acid polypeptide reads, in one-letter code: Probable alpha-L-glutamate ligase 1 (301 aa).

Positions 104–287 (LQLLSRKGIG…VTEPIVEYIE (184 aa)) constitute an ATP-grasp domain. Residues K141, 178–179 (EY), D187, and 211–213 (RSN) each bind ATP. 3 residues coordinate Mg(2+): D248, E260, and N262. Mn(2+) contacts are provided by D248, E260, and N262.

Belongs to the RimK family. The cofactor is Mg(2+). Requires Mn(2+) as cofactor.

The sequence is that of Probable alpha-L-glutamate ligase 1 from Shewanella sp. (strain MR-4).